Here is a 451-residue protein sequence, read N- to C-terminus: UDP-N-acetylmuramoylalanine--D-glutamate ligase (451 aa).

Position 119–125 (119–125) interacts with ATP; that stretch reads GSNGKTT.

This sequence belongs to the MurCDEF family.

It localises to the cytoplasm. The catalysed reaction is UDP-N-acetyl-alpha-D-muramoyl-L-alanine + D-glutamate + ATP = UDP-N-acetyl-alpha-D-muramoyl-L-alanyl-D-glutamate + ADP + phosphate + H(+). Its pathway is cell wall biogenesis; peptidoglycan biosynthesis. Its function is as follows. Cell wall formation. Catalyzes the addition of glutamate to the nucleotide precursor UDP-N-acetylmuramoyl-L-alanine (UMA). The chain is UDP-N-acetylmuramoylalanine--D-glutamate ligase from Streptococcus agalactiae serotype Ia (strain ATCC 27591 / A909 / CDC SS700).